The sequence spans 313 residues: Putative phosphoribosylaminoimidazole-succinocarboxamide synthase 2 (313 aa).

Belongs to the SAICAR synthetase family.

The enzyme catalyses 5-amino-1-(5-phospho-D-ribosyl)imidazole-4-carboxylate + L-aspartate + ATP = (2S)-2-[5-amino-1-(5-phospho-beta-D-ribosyl)imidazole-4-carboxamido]succinate + ADP + phosphate + 2 H(+). It participates in purine metabolism; IMP biosynthesis via de novo pathway; 5-amino-1-(5-phospho-D-ribosyl)imidazole-4-carboxamide from 5-amino-1-(5-phospho-D-ribosyl)imidazole-4-carboxylate: step 1/2. This chain is Putative phosphoribosylaminoimidazole-succinocarboxamide synthase 2 (purC2), found in Mesorhizobium japonicum (strain LMG 29417 / CECT 9101 / MAFF 303099) (Mesorhizobium loti (strain MAFF 303099)).